Reading from the N-terminus, the 618-residue chain is Proline--tRNA ligase (618 aa).

Belongs to the class-II aminoacyl-tRNA synthetase family. ProS type 1 subfamily. In terms of assembly, homodimer.

The protein localises to the cytoplasm. It catalyses the reaction tRNA(Pro) + L-proline + ATP = L-prolyl-tRNA(Pro) + AMP + diphosphate. Functionally, catalyzes the attachment of proline to tRNA(Pro) in a two-step reaction: proline is first activated by ATP to form Pro-AMP and then transferred to the acceptor end of tRNA(Pro). As ProRS can inadvertently accommodate and process non-cognate amino acids such as alanine and cysteine, to avoid such errors it has two additional distinct editing activities against alanine. One activity is designated as 'pretransfer' editing and involves the tRNA(Pro)-independent hydrolysis of activated Ala-AMP. The other activity is designated 'posttransfer' editing and involves deacylation of mischarged Ala-tRNA(Pro). The misacylated Cys-tRNA(Pro) is not edited by ProRS. The polypeptide is Proline--tRNA ligase (Streptococcus pyogenes serotype M2 (strain MGAS10270)).